The chain runs to 315 residues: 2-oxoglutarate and iron-dependent oxygenase domain-containing protein 3 (315 aa).

A disordered region spans residues 1 to 31; sequence MAPQRRGPPRIPEGSSAAERRRATSTKKDRL. Residues 1 to 41 are Cytoplasmic-facing; sequence MAPQRRGPPRIPEGSSAAERRRATSTKKDRLPREAQRTWLR. Positions 18–31 are enriched in basic and acidic residues; the sequence is AERRRATSTKKDRL. A helical; Signal-anchor for type II membrane protein transmembrane segment spans residues 42 to 62; it reads IVAFGVGLALVTCLLWSSVGI. The Lumenal segment spans residues 63–315; it reads DDDVAEVVAR…DHGIEDPVLT (253 aa). A Fe2OG dioxygenase domain is found at 203–305; that stretch reads KPTFFSRINS…AITIAFTCNP (103 aa). Residue Asn-211 is glycosylated (N-linked (GlcNAc...) asparagine). Residues His-226 and Asp-228 each contribute to the Fe cation site. A glycan (N-linked (GlcNAc...) asparagine) is linked at Asn-263. His-284 is a Fe cation binding site. The active site involves Arg-294. Arg-294 contacts 2-oxoglutarate.

This sequence belongs to the OGFOD3 family. It depends on Fe(2+) as a cofactor. L-ascorbate serves as cofactor.

Its subcellular location is the membrane. The chain is 2-oxoglutarate and iron-dependent oxygenase domain-containing protein 3 (Ogfod3) from Mus musculus (Mouse).